The following is a 560-amino-acid chain: NADH-quinone oxidoreductase subunit C/D (560 aa).

Residues 2 to 157 are NADH dehydrogenase I subunit C; sequence NKLENLKQLL…NNQQACTNSL (156 aa). Positions 175-560 are NADH dehydrogenase I subunit D; that stretch reads KYLPLNIGPS…MNLIAGELDR (386 aa).

It in the N-terminal section; belongs to the complex I 30 kDa subunit family. The protein in the C-terminal section; belongs to the complex I 49 kDa subunit family. In terms of assembly, NDH-1 is composed of 13 different subunits. Subunits NuoB, CD, E, F, and G constitute the peripheral sector of the complex.

It localises to the cytoplasm. The protein resides in the cell inner membrane. The enzyme catalyses a quinone + NADH + 5 H(+)(in) = a quinol + NAD(+) + 4 H(+)(out). In terms of biological role, NDH-1 shuttles electrons from NADH, via FMN and iron-sulfur (Fe-S) centers, to quinones in the respiratory chain. The immediate electron acceptor for the enzyme in this species is believed to be ubiquinone. Couples the redox reaction to proton translocation (for every two electrons transferred, four hydrogen ions are translocated across the cytoplasmic membrane), and thus conserves the redox energy in a proton gradient. The chain is NADH-quinone oxidoreductase subunit C/D from Bdellovibrio bacteriovorus (strain ATCC 15356 / DSM 50701 / NCIMB 9529 / HD100).